We begin with the raw amino-acid sequence, 297 residues long: tRNA (guanine-N(7)-)-methyltransferase (297 aa).

Residues glycine 101, 124–125, 171–172, and cysteine 191 each bind S-adenosyl-L-methionine; these read EI and NT. Residue aspartate 194 is part of the active site. 270-272 contacts S-adenosyl-L-methionine; it reads TEE.

It belongs to the class I-like SAM-binding methyltransferase superfamily. TrmB family. As to quaternary structure, forms a complex with trm82.

It is found in the nucleus. It carries out the reaction guanosine(46) in tRNA + S-adenosyl-L-methionine = N(7)-methylguanosine(46) in tRNA + S-adenosyl-L-homocysteine. The protein operates within tRNA modification; N(7)-methylguanine-tRNA biosynthesis. Functionally, catalyzes the formation of N(7)-methylguanine at position 46 (m7G46) in tRNA. This chain is tRNA (guanine-N(7)-)-methyltransferase (trm8), found in Aspergillus niger (strain ATCC MYA-4892 / CBS 513.88 / FGSC A1513).